The following is a 355-amino-acid chain: 3-isopropylmalate dehydrogenase (355 aa).

4 residues coordinate substrate: Arg-90, Arg-100, Arg-128, and Asp-222. Residues Asp-222, Asp-246, and Asp-250 each coordinate Mg(2+). 280–292 is a binding site for NAD(+); it reads GSAPDIAGKGIAN.

The protein belongs to the isocitrate and isopropylmalate dehydrogenases family. LeuB type 1 subfamily. In terms of assembly, homodimer. Mg(2+) serves as cofactor. Requires Mn(2+) as cofactor.

The protein localises to the cytoplasm. It catalyses the reaction (2R,3S)-3-isopropylmalate + NAD(+) = 4-methyl-2-oxopentanoate + CO2 + NADH. It functions in the pathway amino-acid biosynthesis; L-leucine biosynthesis; L-leucine from 3-methyl-2-oxobutanoate: step 3/4. Its function is as follows. Catalyzes the oxidation of 3-carboxy-2-hydroxy-4-methylpentanoate (3-isopropylmalate) to 3-carboxy-4-methyl-2-oxopentanoate. The product decarboxylates to 4-methyl-2 oxopentanoate. The sequence is that of 3-isopropylmalate dehydrogenase from Burkholderia multivorans (strain ATCC 17616 / 249).